An 85-amino-acid polypeptide reads, in one-letter code: Toxin To9 (85 aa).

Positions 1–19 (MNYSTLIAVASLLTAGTES) are cleaved as a signal peptide. The 61-residue stretch at 21–81 (KDGYPVKEGD…AAIKGYGRCR (61 aa)) folds into the LCN-type CS-alpha/beta domain. Intrachain disulfides connect Cys-31–Cys-80, Cys-35–Cys-56, Cys-42–Cys-63, and Cys-46–Cys-65. Pro-82 bears the Proline amide mark.

It belongs to the long (4 C-C) scorpion toxin superfamily. Sodium channel inhibitor family. Alpha subfamily. As to expression, expressed by the venom gland.

The protein localises to the secreted. In terms of biological role, alpha toxins bind voltage-independently at site-3 of sodium channels (Nav) and inhibit the inactivation of the activated channels, thereby blocking neuronal transmission. This chain is Toxin To9, found in Tityus obscurus (Amazonian scorpion).